Reading from the N-terminus, the 322-residue chain is Mycothiol acetyltransferase (322 aa).

N-acetyltransferase domains lie at 5 to 150 and 160 to 322; these read SWLR…DPDD and VTIR…PARG. Glu36 provides a ligand contact to 1D-myo-inositol 2-(L-cysteinylamino)-2-deoxy-alpha-D-glucopyranoside. Acetyl-CoA contacts are provided by residues 79–81 and 87–92; these read LVV and RRGVGT. Residues Glu187, Lys226, and Glu252 each contribute to the 1D-myo-inositol 2-(L-cysteinylamino)-2-deoxy-alpha-D-glucopyranoside site. Residue 256 to 258 coordinates acetyl-CoA; that stretch reads VGV. A 1D-myo-inositol 2-(L-cysteinylamino)-2-deoxy-alpha-D-glucopyranoside-binding site is contributed by Tyr290. 295–300 serves as a coordination point for acetyl-CoA; the sequence is NARAVR.

The protein belongs to the acetyltransferase family. MshD subfamily. In terms of assembly, monomer.

It catalyses the reaction 1D-myo-inositol 2-(L-cysteinylamino)-2-deoxy-alpha-D-glucopyranoside + acetyl-CoA = mycothiol + CoA + H(+). In terms of biological role, catalyzes the transfer of acetyl from acetyl-CoA to desacetylmycothiol (Cys-GlcN-Ins) to form mycothiol. The chain is Mycothiol acetyltransferase from Parafrankia sp. (strain EAN1pec).